Consider the following 179-residue polypeptide: Large ribosomal subunit protein uL5 (179 aa).

It belongs to the universal ribosomal protein uL5 family. Part of the 50S ribosomal subunit; part of the 5S rRNA/L5/L18/L25 subcomplex. Contacts the 5S rRNA and the P site tRNA. Forms a bridge to the 30S subunit in the 70S ribosome.

This is one of the proteins that bind and probably mediate the attachment of the 5S RNA into the large ribosomal subunit, where it forms part of the central protuberance. In the 70S ribosome it contacts protein S13 of the 30S subunit (bridge B1b), connecting the 2 subunits; this bridge is implicated in subunit movement. Contacts the P site tRNA; the 5S rRNA and some of its associated proteins might help stabilize positioning of ribosome-bound tRNAs. The chain is Large ribosomal subunit protein uL5 from Shewanella baltica (strain OS223).